A 309-amino-acid chain; its full sequence is D-allose kinase (309 aa).

Residues 10-17 (GVDMGATH) and 142-149 (GMGFAVWM) each bind ATP.

This sequence belongs to the ROK (NagC/XylR) family.

It carries out the reaction D-allose + ATP = D-allose 6-phosphate + ADP + H(+). It participates in carbohydrate degradation; D-allose degradation. Its function is as follows. Catalyzes the phosphorylation of D-allose to D-allose 6-phosphate. Also has low level glucokinase activity in vitro. In Escherichia coli (strain K12), this protein is D-allose kinase.